Reading from the N-terminus, the 216-residue chain is LexA repressor (216 aa).

A DNA-binding region (H-T-H motif) is located at residues 29–49 (RAEIAQALGFRSPNAAEDHLK). Active-site for autocatalytic cleavage activity residues include S134 and K171.

Belongs to the peptidase S24 family. As to quaternary structure, homodimer.

It carries out the reaction Hydrolysis of Ala-|-Gly bond in repressor LexA.. Represses a number of genes involved in the response to DNA damage (SOS response), including recA and lexA. In the presence of single-stranded DNA, RecA interacts with LexA causing an autocatalytic cleavage which disrupts the DNA-binding part of LexA, leading to derepression of the SOS regulon and eventually DNA repair. This chain is LexA repressor, found in Bordetella parapertussis (strain 12822 / ATCC BAA-587 / NCTC 13253).